Consider the following 296-residue polypeptide: Syntenin-2 (296 aa).

PDZ domains lie at 112 to 191 (EIHL…VRDR) and 196 to 271 (TVTM…IPTV).

In terms of assembly, monomer and homodimer. Interacts with SDCBP. Interacts with TM4SF1.

Its subcellular location is the cytoplasm. The protein localises to the nucleus. It localises to the nucleolus. The protein resides in the nucleoplasm. It is found in the cell membrane. Its subcellular location is the nucleus speckle. Its function is as follows. Binds phosphatidylinositol 4,5-bisphosphate (PIP2). May play a role in the organization of nuclear PIP2, cell division and cell survival. The polypeptide is Syntenin-2 (Sdcbp2) (Rattus norvegicus (Rat)).